Here is a 93-residue protein sequence, read N- to C-terminus: Small ribosomal subunit protein uS19 (93 aa).

The protein belongs to the universal ribosomal protein uS19 family.

In terms of biological role, protein S19 forms a complex with S13 that binds strongly to the 16S ribosomal RNA. In Clostridium perfringens (strain ATCC 13124 / DSM 756 / JCM 1290 / NCIMB 6125 / NCTC 8237 / Type A), this protein is Small ribosomal subunit protein uS19.